The chain runs to 354 residues: V-type proton ATPase subunit C (354 aa).

Belongs to the V-ATPase C subunit family. As to quaternary structure, V-ATPase is a heteromultimeric enzyme composed of a peripheral catalytic V1 complex (components A to H) attached to an integral membrane V0 proton pore complex (components: a, c, c', c'' and d).

Its subcellular location is the vacuole membrane. In terms of biological role, subunit of the peripheral V1 complex of vacuolar ATPase. Subunit C is necessary for the assembly of the catalytic sector of the enzyme and is likely to have a specific function in its catalytic activity. V-ATPase is responsible for acidifying a variety of intracellular compartments in eukaryotic cells. The sequence is that of V-type proton ATPase subunit C (VATC) from Hordeum vulgare (Barley).